Reading from the N-terminus, the 411-residue chain is Serpin A3-2 (411 aa).

The N-terminal stretch at 1 to 24 (MRAERTSFLLALGLLVAGIRSVHC) is a signal peptide. 4 N-linked (GlcNAc...) asparagine glycosylation sites follow: N100, N180, N230, and N264.

It belongs to the serpin family. In terms of assembly, homodimer.

Its subcellular location is the cytoplasmic vesicle. The protein localises to the secretory vesicle. It localises to the chromaffin granule. It is found in the secreted. Functionally, serine protease inhibitor. The sequence is that of Serpin A3-2 from Bos taurus (Bovine).